A 926-amino-acid polypeptide reads, in one-letter code: Alanine--tRNA ligase (926 aa).

Residues His-577, His-581, Cys-680, and His-684 each coordinate Zn(2+).

The protein belongs to the class-II aminoacyl-tRNA synthetase family. The cofactor is Zn(2+).

It localises to the cytoplasm. It carries out the reaction tRNA(Ala) + L-alanine + ATP = L-alanyl-tRNA(Ala) + AMP + diphosphate. Its function is as follows. Catalyzes the attachment of alanine to tRNA(Ala) in a two-step reaction: alanine is first activated by ATP to form Ala-AMP and then transferred to the acceptor end of tRNA(Ala). Also edits incorrectly charged Ser-tRNA(Ala) and Gly-tRNA(Ala) via its editing domain. The sequence is that of Alanine--tRNA ligase from Methylacidiphilum infernorum (isolate V4) (Methylokorus infernorum (strain V4)).